Reading from the N-terminus, the 301-residue chain is GTP cyclohydrolase FolE2 (301 aa).

This sequence belongs to the GTP cyclohydrolase IV family.

The enzyme catalyses GTP + H2O = 7,8-dihydroneopterin 3'-triphosphate + formate + H(+). The protein operates within cofactor biosynthesis; 7,8-dihydroneopterin triphosphate biosynthesis; 7,8-dihydroneopterin triphosphate from GTP: step 1/1. In terms of biological role, converts GTP to 7,8-dihydroneopterin triphosphate. In Pseudomonas savastanoi pv. phaseolicola (strain 1448A / Race 6) (Pseudomonas syringae pv. phaseolicola (strain 1448A / Race 6)), this protein is GTP cyclohydrolase FolE2.